The sequence spans 187 residues: Elongation factor P (187 aa).

The protein belongs to the elongation factor P family.

Its subcellular location is the cytoplasm. Its pathway is protein biosynthesis; polypeptide chain elongation. In terms of biological role, involved in peptide bond synthesis. Stimulates efficient translation and peptide-bond synthesis on native or reconstituted 70S ribosomes in vitro. Probably functions indirectly by altering the affinity of the ribosome for aminoacyl-tRNA, thus increasing their reactivity as acceptors for peptidyl transferase. The polypeptide is Elongation factor P (Acidothermus cellulolyticus (strain ATCC 43068 / DSM 8971 / 11B)).